The chain runs to 274 residues: Large ribosomal subunit protein uL2 (274 aa).

The disordered stretch occupies residues 224-274 (VMNPVDHPHGGGEGRSPIGRNPVTPWGKPALGARTRKKKPGDRLIVKRRAR). The segment covering 257-274 (RTRKKKPGDRLIVKRRAR) has biased composition (basic residues).

It belongs to the universal ribosomal protein uL2 family. Part of the 50S ribosomal subunit. Forms a bridge to the 30S subunit in the 70S ribosome.

Its function is as follows. One of the primary rRNA binding proteins. Required for association of the 30S and 50S subunits to form the 70S ribosome, for tRNA binding and peptide bond formation. It has been suggested to have peptidyltransferase activity; this is somewhat controversial. Makes several contacts with the 16S rRNA in the 70S ribosome. This is Large ribosomal subunit protein uL2 from Pelotomaculum thermopropionicum (strain DSM 13744 / JCM 10971 / SI).